The primary structure comprises 1765 residues: MEERYYPVIFPDERNFRPFTSDSLAAIEKRIAIQKERKKSKDKAAAEPQPRPQLDLKASRKLPKLYGDIPPELVAKPLEDLDPFYKDHKTFMVLNKKRTIYRFSAKRALFILGPFNPLRSLMIRISVHSVFSMFIICTVIINCMFMANSMERSFDNDIPEYVFIGIYILEAVIKILARGFIVDEFSFLRDPWNWLDFIVIGTAIATCFPGSQVNLSALRTFRVFRALKAISVISGLKVIVGALLRSVKKLVDVMVLTLFCLSIFALVGQQLFMGILNQKCIKHNCGPNPASNKDCFEKEKDSEDFIMCGTWLGSRPCPNGSTCDKTTLNPDNNYTKFDNFGWSFLAMFRVMTQDSWERLYRQILRTSGIYFVFFFVVVIFLGSFYLLNLTLAVVTMAYEEQNRNVAAETEAKEKMFQEAQQLLREEKEALVAMGIDRSSLNSLQASSFSPKKRKFFGSKTRKSFFMRGSKTAQASASDSEDDASKNPQLLEQTKRLSQNLPVDLFDEHVDPLHRQRALSAVSILTITMQEQEKFQEPCFPCGKNLASKYLVWDCSPQWLCIKKVLRTIMTDPFTELAITICIIINTVFLAVEHHNMDDNLKTILKIGNWVFTGIFIAEMCLKIIALDPYHYFRHGWNVFDSIVALLSLADVLYNTLSDNNRSFLASLRVLRVFKLAKSWPTLNTLIKIIGHSVGALGNLTVVLTIVVFIFSVVGMRLFGTKFNKTAYATQERPRRRWHMDNFYHSFLVVFRILCGEWIENMWGCMQDMDGSPLCIIVFVLIMVIGKLVVLNLFIALLLNSFSNEEKDGSLEGETRKTKVQLALDRFRRAFSFMLHALQSFCCKKCRRKNSPKPKETTESFAGENKDSILPDARPWKEYDTDMALYTGQAGAPLAPLAEVEDDVEYCGEGGALPTSQHSAGVQAGDLPPETKQLTSPDDQGVEMEVFSEEDLHLSIQSPRKKSDAVSMLSECSTIDLNDIFRNLQKTVSPKKQPDRCFPKGLSCHFLCHKTDKRKSPWVLWWNIRKTCYQIVKHSWFESFIIFVILLSSGALIFEDVNLPSRPQVEKLLRCTDNIFTFIFLLEMILKWVAFGFRRYFTSAWCWLDFLIVVVSVLSLMNLPSLKSFRTLRALRPLRALSQFEGMKVVVYALISAIPAILNVLLVCLIFWLVFCILGVNLFSGKFGRCINGTDINMYLDFTEVPNRSQCNISNYSWKVPQVNFDNVGNAYLALLQVATYKGWLEIMNAAVDSREKDEQPDFEANLYAYLYFVVFIIFGSFFTLNLFIGVIIDNFNQQQKKLGGQDIFMTEEQKKYYNAMKKLGTKKPQKPIPRPLNKCQAFVFDLVTSQVFDVIILGLIVLNMIIMMAESADQPKDVKKTFDILNIAFVVIFTIECLIKVFALRQHYFTNGWNLFDCVVVVLSIISTLVSRLEDSDISFPPTLFRVVRLARIGRILRLVRAARGIRTLLFALMMSLPSLFNIGLLLFLVMFIYAIFGMSWFSKVKKGSGIDDIFNFETFTGSMLCLFQITTSAGWDTLLNPMLEAKEHCNSSSQDSCQQPQIAVVYFVSYIIISFLIVVNMYIAVILENFNTATEESEDPLGEDDFEIFYEVWEKFDPEASQFIQYSALSDFADALPEPLRVAKPNKFQFLVMDLPMVMGDRLHCMDVLFAFTTRVLGDSSGLDTMKTMMEEKFMEANPFKKLYEPIVTTTKRKEEEQGAAVIQRAYRKHMEKMVKLRLKDRSSSSHQVFCNGDLSSLDVAKVKVHND.

The Cytoplasmic portion of the chain corresponds to 1–126; it reads MEERYYPVIF…PLRSLMIRIS (126 aa). The stretch at 115 to 403 is one I repeat; sequence FNPLRSLMIR…VTMAYEEQNR (289 aa). Residues 127 to 148 form a helical membrane-spanning segment; the sequence is VHSVFSMFIICTVIINCMFMAN. Residues 149-157 are Extracellular-facing; it reads SMERSFDND. A helical membrane pass occupies residues 158-177; that stretch reads IPEYVFIGIYILEAVIKILA. Over 178–189 the chain is Cytoplasmic; it reads RGFIVDEFSFLR. A helical transmembrane segment spans residues 190-209; sequence DPWNWLDFIVIGTAIATCFP. Residues 210 to 216 are Extracellular-facing; the sequence is GSQVNLS. A glycan (N-linked (GlcNAc...) asparagine) is linked at N214. The helical; Voltage-sensor transmembrane segment at 217–236 threads the bilayer; the sequence is ALRTFRVFRALKAISVISGL. At 237-252 the chain is on the cytoplasmic side; that stretch reads KVIVGALLRSVKKLVD. Residues 253-266 traverse the membrane as a helical segment; it reads VMVLTLFCLSIFAL. The Extracellular segment spans residues 267 to 339; the sequence is VGQQLFMGIL…PDNNYTKFDN (73 aa). Cysteines 280 and 317 form a disulfide. N-linked (GlcNAc...) asparagine glycans are attached at residues N319 and N333. The pore-forming intramembrane region spans 340–364; that stretch reads FGWSFLAMFRVMTQDSWERLYRQIL. Topologically, residues 365-371 are extracellular; sequence RTSGIYF. A helical transmembrane segment spans residues 372 to 397; that stretch reads VFFFVVVIFLGSFYLLNLTLAVVTMA. Topologically, residues 398 to 567 are cytoplasmic; the sequence is YEEQNRNVAA…WLCIKKVLRT (170 aa). The II repeat unit spans residues 554 to 820; sequence CSPQWLCIKK…EGETRKTKVQ (267 aa). A helical transmembrane segment spans residues 568–591; that stretch reads IMTDPFTELAITICIIINTVFLAV. Residues 592-602 lie on the Extracellular side of the membrane; that stretch reads EHHNMDDNLKT. Residues 603 to 626 form a helical membrane-spanning segment; the sequence is ILKIGNWVFTGIFIAEMCLKIIAL. Residues 627–634 are Cytoplasmic-facing; sequence DPYHYFRH. The helical transmembrane segment at 635–656 threads the bilayer; that stretch reads GWNVFDSIVALLSLADVLYNTL. The Extracellular portion of the chain corresponds to 657–662; sequence SDNNRS. An N-linked (GlcNAc...) asparagine glycan is attached at N660. A helical; Voltage-sensor transmembrane segment spans residues 663–682; sequence FLASLRVLRVFKLAKSWPTL. The Cytoplasmic portion of the chain corresponds to 683 to 697; the sequence is NTLIKIIGHSVGALG. A helical transmembrane segment spans residues 698–720; sequence NLTVVLTIVVFIFSVVGMRLFGT. Topologically, residues 721 to 741 are extracellular; the sequence is KFNKTAYATQERPRRRWHMDN. Residue N723 is glycosylated (N-linked (GlcNAc...) asparagine). Positions 742–762 form an intramembrane region, pore-forming; it reads FYHSFLVVFRILCGEWIENMW. At 763–772 the chain is on the extracellular side; it reads GCMQDMDGSP. Residues C764 and C774 are joined by a disulfide bond. The chain crosses the membrane as a helical span at residues 773-798; sequence LCIIVFVLIMVIGKLVVLNLFIALLL. Residues 799 to 1029 are Cytoplasmic-facing; that stretch reads NSFSNEEKDG…WWNIRKTCYQ (231 aa). Residues 1022-1319 form an III repeat; sequence NIRKTCYQIV…KKYYNAMKKL (298 aa). Residues 1030 to 1052 form a helical membrane-spanning segment; that stretch reads IVKHSWFESFIIFVILLSSGALI. Residues 1053–1066 lie on the Extracellular side of the membrane; it reads FEDVNLPSRPQVEK. The chain crosses the membrane as a helical span at residues 1067–1092; sequence LLRCTDNIFTFIFLLEMILKWVAFGF. Topologically, residues 1093 to 1098 are cytoplasmic; sequence RRYFTS. A helical transmembrane segment spans residues 1099–1116; that stretch reads AWCWLDFLIVVVSVLSLM. N1117 is a topological domain (extracellular). A helical; Voltage-sensor transmembrane segment spans residues 1118–1139; sequence LPSLKSFRTLRALRPLRALSQF. Residues 1140 to 1158 lie on the Cytoplasmic side of the membrane; the sequence is EGMKVVVYALISAIPAILN. A helical transmembrane segment spans residues 1159 to 1180; sequence VLLVCLIFWLVFCILGVNLFSG. Residues 1181-1223 lie on the Extracellular side of the membrane; that stretch reads KFGRCINGTDINMYLDFTEVPNRSQCNISNYSWKVPQVNFDNV. Residues N1187, N1202, N1207, and N1210 are each glycosylated (N-linked (GlcNAc...) asparagine). Residues 1224–1245 constitute an intramembrane region (pore-forming); sequence GNAYLALLQVATYKGWLEIMNA. Topologically, residues 1246-1261 are extracellular; it reads AVDSREKDEQPDFEAN. Residues 1262–1288 form a helical membrane-spanning segment; sequence LYAYLYFVVFIIFGSFFTLNLFIGVII. Residues 1289–1341 are Cytoplasmic-facing; that stretch reads DNFNQQQKKLGGQDIFMTEEQKKYYNAMKKLGTKKPQKPIPRPLNKCQAFVFD. The IV repeat unit spans residues 1328–1619; that stretch reads IPRPLNKCQA…WEKFDPEASQ (292 aa). The helical transmembrane segment at 1342–1365 threads the bilayer; the sequence is LVTSQVFDVIILGLIVLNMIIMMA. Residues 1366 to 1376 lie on the Extracellular side of the membrane; that stretch reads ESADQPKDVKK. Residues 1377–1400 form a helical membrane-spanning segment; it reads TFDILNIAFVVIFTIECLIKVFAL. Topologically, residues 1401-1406 are cytoplasmic; the sequence is RQHYFT. The helical transmembrane segment at 1407–1430 threads the bilayer; the sequence is NGWNLFDCVVVVLSIISTLVSRLE. The Extracellular segment spans residues 1431 to 1440; it reads DSDISFPPTL. A helical; Voltage-sensor transmembrane segment spans residues 1441–1463; that stretch reads FRVVRLARIGRILRLVRAARGIR. Over 1464-1478 the chain is Cytoplasmic; the sequence is TLLFALMMSLPSLFN. A helical transmembrane segment spans residues 1479–1501; the sequence is IGLLLFLVMFIYAIFGMSWFSKV. Over 1502 to 1515 the chain is Extracellular; it reads KKGSGIDDIFNFET. Residues 1516-1538 constitute an intramembrane region (pore-forming); sequence FTGSMLCLFQITTSAGWDTLLNP. The Extracellular portion of the chain corresponds to 1539 to 1559; the sequence is MLEAKEHCNSSSQDSCQQPQI. An N-linked (GlcNAc...) asparagine glycan is attached at N1547. Residues 1560–1584 form a helical membrane-spanning segment; sequence AVVYFVSYIIISFLIVVNMYIAVIL. Residues 1585-1765 are Cytoplasmic-facing; it reads ENFNTATEES…DVAKVKVHND (181 aa).

It belongs to the sodium channel (TC 1.A.1.10) family. Nav1.9/SCN11A subfamily. In terms of assembly, the voltage-resistant sodium channel consists of an ion conducting pore forming alpha-subunit regulated by one or more auxiliary subunits SCN1B, SCN2B and SCN3B. As to expression, expressed (at protein level) in myenteric sensory neurons. Expressed in small sensory neurons of the dorsal root ganglia (C-fiber neurons) and trigeminal ganglia.

The protein localises to the cell membrane. The catalysed reaction is Na(+)(in) = Na(+)(out). Activity is not sensitive to inhibition by tetrodotoxin. Its function is as follows. Sodium channel mediating the voltage-dependent sodium ion permeability of excitable membranes. Assuming opened or closed conformations in response to the voltage difference across the membrane, the protein forms a sodium-selective channel through which sodium ions may pass in accordance with their electrochemical gradient. Involved in membrane depolarization during action potential in nociceptors which function as key relay stations for the electrical transmission of pain signals from the periphery to the central nervous system. Also involved in rapid BDNF-evoked neuronal depolarization. The polypeptide is Sodium channel protein type 11 subunit alpha (Rattus norvegicus (Rat)).